Reading from the N-terminus, the 277-residue chain is Small ribosomal subunit protein uS2 (277 aa).

Residues 228–241 are compositionally biased toward basic and acidic residues; that stretch reads YEERLQAETDKDAE. The segment at 228 to 277 is disordered; the sequence is YEERLQAETDKDAESSTVQQEENPEADIPESIETKESVSAAADSDLDENE.

This sequence belongs to the universal ribosomal protein uS2 family.

In Syntrophus aciditrophicus (strain SB), this protein is Small ribosomal subunit protein uS2.